A 65-amino-acid polypeptide reads, in one-letter code: Beta-defensin 106A (65 aa).

Positions M1 to A20 are cleaved as a signal peptide. Cystine bridges form between C26–C53, C33–C47, and C37–C54.

It belongs to the beta-defensin family. In terms of assembly, monomer. Interacts with CCR2 (via extracellular N-terminal region); this interaction may preferentially require specific tyrosine sulfation on CCR2.

It is found in the secreted. It localises to the membrane. Functionally, has antibacterial activity. Acts as a ligand for C-C chemokine receptor CCR2. The polypeptide is Beta-defensin 106A (DEFB106A) (Gorilla gorilla gorilla (Western lowland gorilla)).